The primary structure comprises 109 residues: uncharacterized protein (109 aa).

This sequence to M.jannaschii MJ1244 and MJ1245 and M.thermoautotrophicum MTH1110.

This is an uncharacterized protein from Methanococcus maripaludis (Methanococcus deltae).